Consider the following 641-residue polypeptide: MASTRRPFGPPRSGFDLRDMFLDSSRMEEIRNLQARSLGQVTPGQSRILKRNQTMDEKYLMPKEEAMAGRGVSLGLRPPTISSKTRASEALRKLAQIETKILNRKQVPMAWSDVESDSTSIEQSLPKRTGAASVSSQYPHRTFQKQVNKTCVSKSDGPSGNGSRFLKKKELPTEARSPGLAVGTGKQALLPTKKESASDEEEEMLLLRSLMESSREKEANRNQELPGSSVSRSNLGKVFLDPTPDQPGVLSLLSVDQSSLKSPRPIQSTRVGLRTHSRQASSAGDTVSITASPPILDDFSKSASSKMGCIKLASSPSRTELESSEEPVSEAAADSLHDFRINILSIDDLVLADGDKSDGDQREEDCVREGISVRSSSPTSPTRLEAQMWPKNCVFQGTATVVGDGEGLTTESDVSEPPGTSSSAAVQSHSMSRALTASPAYSEDFEQFSGPLALEESLDRTLDTLSKFSSSGQTDIVARQPLSRTEWGRGVTRVVKETAVQTLDPAFAYQWSKAGGIAAVGPALGGAYVDPAPIASHIVSADAIEALTAYSPAVLALNDMLKQQLSLTQQFIEASHQLHGSLLQSLDGDSFHYHTLEEAKEYIRCHRPAPLTMEAALQEVREELQVPASEACLGTCPPRNQ.

At S112 the chain carries Phosphoserine. Disordered stretches follow at residues 118–243 (STSI…LDPT), 261–289 (KSPRPIQSTRVGLRTHSRQASSAGDTVSI), 355–386 (DKSDGDQREEDCVREGISVRSSSPTSPTRLEA), and 404–430 (DGEGLTTESDVSEPPGTSSSAAVQSHS). Residues 132–162 (ASVSSQYPHRTFQKQVNKTCVSKSDGPSGNG) show a composition bias toward polar residues. S198 carries the post-translational modification Phosphoserine. Composition is skewed to polar residues over residues 222–234 (NQELPGSSVSRSN) and 278–289 (RQASSAGDTVSI). A compositionally biased stretch (basic and acidic residues) spans 355 to 368 (DKSDGDQREEDCVR). Composition is skewed to low complexity over residues 374-383 (RSSSPTSPTR) and 421-430 (SSSAAVQSHS).

This is an uncharacterized protein from Mus musculus (Mouse).